The following is a 921-amino-acid chain: 2-oxoadipate dehydrogenase complex component E1 (921 aa).

An N6-succinyllysine mark is found at Lys184 and Lys189. Residues 300-319 (GKTRGRQQSREDGDYSPNGS) are disordered. 2 positions are modified to N6-succinyllysine: Lys801 and Lys819.

Belongs to the alpha-ketoglutarate dehydrogenase family. The 2-oxoadipate dehydrogenase complex is composed of OADH (2-oxoadipate dehydrogenase; E1a), DLST (dihydrolipoamide succinyltransferase; E2) and DLD (dihydrolipoamide dehydrogenase; E3). E1a functional unit is a dimer. Requires thiamine diphosphate as cofactor.

It localises to the mitochondrion. It catalyses the reaction N(6)-[(R)-lipoyl]-L-lysyl-[protein] + 2-oxoadipate + H(+) = N(6)-[(R)-S(8)-glutaryldihydrolipoyl]-L-lysyl-[protein] + CO2. It functions in the pathway amino-acid degradation. Its function is as follows. 2-oxoadipate dehydrogenase (E1a) component of the 2-oxoadipate dehydrogenase complex (OADHC). Participates in the first step, rate limiting for the overall conversion of 2-oxoadipate (alpha-ketoadipate) to glutaryl-CoA and CO(2) catalyzed by the whole OADHC. Catalyzes the irreversible decarboxylation of 2-oxoadipate via the thiamine diphosphate (ThDP) cofactor and subsequent transfer of the decarboxylated acyl intermediate on an oxidized dihydrolipoyl group that is covalently amidated to the E2 enzyme (dihydrolipoyllysine-residue succinyltransferase or DLST). Can catalyze the decarboxylation of 2-oxoglutarate in vitro, but at a much lower rate than 2-oxoadipate. Responsible for the last step of L-lysine, L-hydroxylysine and L-tryptophan catabolism with the common product being 2-oxoadipate. This is 2-oxoadipate dehydrogenase complex component E1 (Dhtkd1) from Mus musculus (Mouse).